The primary structure comprises 468 residues: Ribulose bisphosphate carboxylase large chain (468 aa).

Lys-5 carries the post-translational modification N6,N6,N6-trimethyllysine. The substrate site is built by Asn-114 and Thr-164. The active-site Proton acceptor is Lys-166. Lys-168 serves as a coordination point for substrate. Lys-192, Asp-194, and Glu-195 together coordinate Mg(2+). Position 192 is an N6-carboxylysine (Lys-192). The active-site Proton acceptor is His-285. Substrate is bound by residues Arg-286, His-318, and Ser-370.

Belongs to the RuBisCO large chain family. Type I subfamily. Heterohexadecamer of 8 large chains and 8 small chains; disulfide-linked. The disulfide link is formed within the large subunit homodimers. The cofactor is Mg(2+). The disulfide bond which can form in the large chain dimeric partners within the hexadecamer appears to be associated with oxidative stress and protein turnover.

It is found in the plastid. Its subcellular location is the chloroplast. The enzyme catalyses 2 (2R)-3-phosphoglycerate + 2 H(+) = D-ribulose 1,5-bisphosphate + CO2 + H2O. It carries out the reaction D-ribulose 1,5-bisphosphate + O2 = 2-phosphoglycolate + (2R)-3-phosphoglycerate + 2 H(+). Functionally, ruBisCO catalyzes two reactions: the carboxylation of D-ribulose 1,5-bisphosphate, the primary event in carbon dioxide fixation, as well as the oxidative fragmentation of the pentose substrate in the photorespiration process. Both reactions occur simultaneously and in competition at the same active site. The chain is Ribulose bisphosphate carboxylase large chain from Catesbaea spinosa.